The chain runs to 163 residues: Lipoprotein signal peptidase (163 aa).

4 helical membrane-spanning segments follow: residues 9–29, 39–59, 67–87, and 92–112; these read YLAIAIIVLLLDQLSKWSALS, VLPFMNWLLLFNPGTAFSFLA, WFFTVLGLAASIYIIWMLYKS, and LLCIALSLILGGALGNVLDRV. Catalysis depends on residues aspartate 119 and aspartate 137. A helical transmembrane segment spans residues 130–150; it reads WPAFNIADSAICVGAALIIWG.

The protein belongs to the peptidase A8 family.

The protein resides in the cell inner membrane. It carries out the reaction Release of signal peptides from bacterial membrane prolipoproteins. Hydrolyzes -Xaa-Yaa-Zaa-|-(S,diacylglyceryl)Cys-, in which Xaa is hydrophobic (preferably Leu), and Yaa (Ala or Ser) and Zaa (Gly or Ala) have small, neutral side chains.. Its pathway is protein modification; lipoprotein biosynthesis (signal peptide cleavage). In terms of biological role, this protein specifically catalyzes the removal of signal peptides from prolipoproteins. This is Lipoprotein signal peptidase from Polynucleobacter necessarius subsp. necessarius (strain STIR1).